The chain runs to 64 residues: Large ribosomal subunit protein uL30 (64 aa).

It belongs to the universal ribosomal protein uL30 family. In terms of assembly, part of the 50S ribosomal subunit.

In Rhodopseudomonas palustris (strain BisA53), this protein is Large ribosomal subunit protein uL30.